A 227-amino-acid chain; its full sequence is Cytochrome c oxidase subunit 2 (227 aa).

Residues 1–14 (MAYPFQLGLQDATS) are Mitochondrial intermembrane-facing. A helical membrane pass occupies residues 15 to 45 (PIMEELLHFHDHTLMIVFLISSLVLYIISLM). At 46–59 (LTTKLTHTSTMDAQ) the chain is on the mitochondrial matrix side. Residues 60–87 (EVETVWTILPAIILILIALPSLRILYMM) form a helical membrane-spanning segment. At 88 to 227 (DEINNPSLTV…YFETWSAVMV (140 aa)) the chain is on the mitochondrial intermembrane side. Cu cation-binding residues include His161, Cys196, Glu198, Cys200, His204, and Met207. Residue Glu198 coordinates Mg(2+). A Phosphotyrosine modification is found at Tyr218.

Belongs to the cytochrome c oxidase subunit 2 family. As to quaternary structure, component of the cytochrome c oxidase (complex IV, CIV), a multisubunit enzyme composed of 14 subunits. The complex is composed of a catalytic core of 3 subunits MT-CO1, MT-CO2 and MT-CO3, encoded in the mitochondrial DNA, and 11 supernumerary subunits COX4I, COX5A, COX5B, COX6A, COX6B, COX6C, COX7A, COX7B, COX7C, COX8 and NDUFA4, which are encoded in the nuclear genome. The complex exists as a monomer or a dimer and forms supercomplexes (SCs) in the inner mitochondrial membrane with NADH-ubiquinone oxidoreductase (complex I, CI) and ubiquinol-cytochrome c oxidoreductase (cytochrome b-c1 complex, complex III, CIII), resulting in different assemblies (supercomplex SCI(1)III(2)IV(1) and megacomplex MCI(2)III(2)IV(2)). Found in a complex with TMEM177, COA6, COX18, COX20, SCO1 and SCO2. Interacts with TMEM177 in a COX20-dependent manner. Interacts with COX20. Interacts with COX16. Cu cation serves as cofactor.

It is found in the mitochondrion inner membrane. It catalyses the reaction 4 Fe(II)-[cytochrome c] + O2 + 8 H(+)(in) = 4 Fe(III)-[cytochrome c] + 2 H2O + 4 H(+)(out). Functionally, component of the cytochrome c oxidase, the last enzyme in the mitochondrial electron transport chain which drives oxidative phosphorylation. The respiratory chain contains 3 multisubunit complexes succinate dehydrogenase (complex II, CII), ubiquinol-cytochrome c oxidoreductase (cytochrome b-c1 complex, complex III, CIII) and cytochrome c oxidase (complex IV, CIV), that cooperate to transfer electrons derived from NADH and succinate to molecular oxygen, creating an electrochemical gradient over the inner membrane that drives transmembrane transport and the ATP synthase. Cytochrome c oxidase is the component of the respiratory chain that catalyzes the reduction of oxygen to water. Electrons originating from reduced cytochrome c in the intermembrane space (IMS) are transferred via the dinuclear copper A center (CU(A)) of subunit 2 and heme A of subunit 1 to the active site in subunit 1, a binuclear center (BNC) formed by heme A3 and copper B (CU(B)). The BNC reduces molecular oxygen to 2 water molecules using 4 electrons from cytochrome c in the IMS and 4 protons from the mitochondrial matrix. The chain is Cytochrome c oxidase subunit 2 (MT-CO2) from Lycalopex culpaeus (Culpeo fox).